A 1241-amino-acid polypeptide reads, in one-letter code: MIENWPQKPEGSQWTDDQWKAVVANGRDILVAAAAGSGKTAVLVERIIKKIIREENPVDVDRLLVVTFTNAAAQEMKNRIGEALEKVLIDGPGSQHIRKQLSLLNKASISTIHSFCLQVIRGYYYMLDVDPRFRIANQTENELLKEEVLDDILEEEYGIEDNSIFFELVDRYTSDRSDDDLQRMILALHTESRAHPNPEKWLDKLVEAYDVEGKTIEDLVYASYLLEDVKFQLETAEKHIRKATELAMLPDGPAPRVETLQADLALLGTLSSAARGSWTSVYEAMQNVSWQTLKRIKKSDYNEDVVKRVDSLRNKAKDEVKKLQEELFSRRPESFLRDFQDMHPVLEKLVKLVKVFTERFQAIKRDKGMVDFTDLEHFCLQILSEQSEDGEMKPSAVALQYRNKFAEVLVDEYQDTNFVQESIIKFVTKDFESEGNLFMVGDVKQSIYRFRLAEPGLFLGKYKRFTQEGSGGGMKIDLAKNFRSRHEVLAGTNFIFKQIMGEEVGEIDYDADAELKLGASYPEGEDVAAELLCIQQTEEEVQDGEEGAEVEKAQLEARLMAQRIKAMVDSGYAVYDRKTDSMRPVQYRDFVILLRSMPWAPQIMEELKLQGIPVYADLATGYFEATEVNIMMNVFRVIDNPMQDIPLAAVLRSPIVGLNDEELATLRAHGKKGSFYEVMSSFLKGAPLEEEQELHDKLEWFYKLLQGWREFARQQSLSDLIWKVYGETGYYDFVGGLPAGKQRQANLRVLYDRARQYEATSFRGLFRFLRFIERILERGDDMGTARALGEQEDVVRIMTIHKSKGLEFPVVFVAGLGRRFNTQDLMKRFLLHKDFGFGSQFIDPRKRIKYTTLSQLAIKRKMKMELIAEEMRVLYVALTRAKEKLILIGTVKDANKEMEKWLDAREHSEWLLPDHIRAGASCYLDWIAPSLYRHRDSEMLLELGQGNIPGEIYEYSASWKVEVVEGKDLLAPEPVQEEKQELLEALRDKKAVPLESERKEEVYDRLMWKYGYEDATSHRAKQSVTEIKRNYQSEEGSDNAFIKKLRAPIKTRPRFMEKKGLTYAERGTAVHAVMQHVDLKKPITIEVLQEQIARMVNKELLTFEQAEEIAIEKVISFFDSDLGKRVLAAKSVEREVPFTMMLSAEEAYQDWQGKKGESILVQGVIDCMIEEEDGITLIDFKTDTIEGKFPGGFDQAKPTLEDRYKVQLSLYAKALEKSLKHPVKEKCLYFFDGNHVVNIEE.

The UvrD-like helicase ATP-binding domain maps to 12–485; it reads SQWTDDQWKA…IDLAKNFRSR (474 aa). Residue 33-40 participates in ATP binding; that stretch reads AAAGSGKT. A UvrD-like helicase C-terminal domain is found at 505–805; sequence GEIDYDADAE…RIMTIHKSKG (301 aa).

The protein belongs to the helicase family. AddA subfamily. As to quaternary structure, heterodimer of AddA and AddB/RexB. The cofactor is Mg(2+).

The catalysed reaction is Couples ATP hydrolysis with the unwinding of duplex DNA by translocating in the 3'-5' direction.. The enzyme catalyses ATP + H2O = ADP + phosphate + H(+). Functionally, the heterodimer acts as both an ATP-dependent DNA helicase and an ATP-dependent, dual-direction single-stranded exonuclease. Recognizes the chi site generating a DNA molecule suitable for the initiation of homologous recombination. The AddA nuclease domain is required for chi fragment generation; this subunit has the helicase and 3' -&gt; 5' nuclease activities. This Bacillus mycoides (strain KBAB4) (Bacillus weihenstephanensis) protein is ATP-dependent helicase/nuclease subunit A.